A 481-amino-acid polypeptide reads, in one-letter code: 6-phosphogluconate dehydrogenase, decarboxylating (481 aa).

NADP(+)-binding positions include 11-16 (GLAVMG), 34-36 (NRT), 76-78 (VKA), and N104. Substrate is bound by residues N104 and 130 to 132 (SGG). K184 acts as the Proton acceptor in catalysis. Substrate is bound at residue 187 to 188 (HN). Residue E191 is the Proton donor of the active site. Residues Y192, K259, R286, R445, and H451 each coordinate substrate.

This sequence belongs to the 6-phosphogluconate dehydrogenase family. Homodimer.

It carries out the reaction 6-phospho-D-gluconate + NADP(+) = D-ribulose 5-phosphate + CO2 + NADPH. It participates in carbohydrate degradation; pentose phosphate pathway; D-ribulose 5-phosphate from D-glucose 6-phosphate (oxidative stage): step 3/3. Its function is as follows. Catalyzes the oxidative decarboxylation of 6-phosphogluconate to ribulose 5-phosphate and CO(2), with concomitant reduction of NADP to NADPH. This is 6-phosphogluconate dehydrogenase, decarboxylating (Pgd) from Ceratitis capitata (Mediterranean fruit fly).